We begin with the raw amino-acid sequence, 202 residues long: Matrix protein (202 aa).

A PPXY motif motif is present at residues 35-38; it reads PPEY. Residues 115-151 form an essential for glycoprotein binding region; the sequence is KLRRTLIFQWADSRGPLEGEELEYSQEITWDDNTEFV.

The protein belongs to the lyssavirus matrix protein family. In terms of assembly, homomultimer. Interacts with nucleoprotein and with the cytoplasmic domain of glycoprotein. Interacts with host ATP6V1A; this interaction plays an important role in virion uncoating after viral entry.

The protein resides in the virion membrane. The protein localises to the host endomembrane system. It is found in the host cytoplasm. Plays a major role in assembly, budding and uncoating of virion after membrane fusion. Completely covers the ribonucleoprotein coil and keep it in condensed bullet-shaped form. Inhibits viral transcription and stimulates replication. Plays a major role in early induction of TRAIL-mediated apoptosis in infected neurons. Inhibits the integrated stress response (ISR) in the infected cell by blocking the formation of stress granules. The sequence is that of Matrix protein (M) from Homo sapiens (Human).